A 126-amino-acid chain; its full sequence is Probable V-type proton ATPase subunit G (126 aa).

Residues 23–45 (NEARKRKLQRTKQAKQEAQAEVE) are disordered. Residues 26–35 (RKRKLQRTKQ) are compositionally biased toward basic residues.

The protein belongs to the V-ATPase G subunit family. V-ATPase is a heteromultimeric enzyme made up of two complexes: the ATP-hydrolytic V1 complex and the proton translocation V0 complex. The V1 complex consists of three catalytic AB heterodimers that form a heterohexamer, three peripheral stalks each consisting of EG heterodimers, one central rotor including subunits D and F, and the regulatory subunits C and H. The proton translocation complex V0 consists of the proton transport subunit a, a ring of proteolipid subunits c9c'', rotary subunit d, subunits e and f, and the accessory subunits vah-19/Ac45 and vah-20/PRR.

In terms of biological role, subunit of the V1 complex of vacuolar(H+)-ATPase (V-ATPase), a multisubunit enzyme composed of a peripheral complex (V1) that hydrolyzes ATP and a membrane integral complex (V0) that translocates protons. V-ATPase is responsible for acidifying and maintaining the pH of intracellular compartments and in some cell types, is targeted to the plasma membrane, where it is responsible for acidifying the extracellular environment. In neurons, required for necrotic cell death by promoting intracellular acidification. The chain is Probable V-type proton ATPase subunit G from Caenorhabditis briggsae.